The primary structure comprises 112 residues: Iron-sulfur cluster assembly protein CyaY (112 aa).

It belongs to the frataxin family.

Involved in iron-sulfur (Fe-S) cluster assembly. May act as a regulator of Fe-S biogenesis. The protein is Iron-sulfur cluster assembly protein CyaY of Janthinobacterium sp. (strain Marseille) (Minibacterium massiliensis).